A 443-amino-acid chain; its full sequence is ATP-dependent protease ATPase subunit HslU (443 aa).

Residues Ile20, 62-67 (GVGKTE), Asp255, Glu321, and Arg393 each bind ATP.

Belongs to the ClpX chaperone family. HslU subfamily. A double ring-shaped homohexamer of HslV is capped on each side by a ring-shaped HslU homohexamer. The assembly of the HslU/HslV complex is dependent on binding of ATP.

It is found in the cytoplasm. Its function is as follows. ATPase subunit of a proteasome-like degradation complex; this subunit has chaperone activity. The binding of ATP and its subsequent hydrolysis by HslU are essential for unfolding of protein substrates subsequently hydrolyzed by HslV. HslU recognizes the N-terminal part of its protein substrates and unfolds these before they are guided to HslV for hydrolysis. This is ATP-dependent protease ATPase subunit HslU from Helicobacter pylori (strain P12).